Here is a 294-residue protein sequence, read N- to C-terminus: ATP phosphoribosyltransferase (294 aa).

It belongs to the ATP phosphoribosyltransferase family. Long subfamily. It depends on Mg(2+) as a cofactor.

The protein localises to the cytoplasm. The catalysed reaction is 1-(5-phospho-beta-D-ribosyl)-ATP + diphosphate = 5-phospho-alpha-D-ribose 1-diphosphate + ATP. The protein operates within amino-acid biosynthesis; L-histidine biosynthesis; L-histidine from 5-phospho-alpha-D-ribose 1-diphosphate: step 1/9. Its activity is regulated as follows. Feedback inhibited by histidine. Its function is as follows. Catalyzes the condensation of ATP and 5-phosphoribose 1-diphosphate to form N'-(5'-phosphoribosyl)-ATP (PR-ATP). Has a crucial role in the pathway because the rate of histidine biosynthesis seems to be controlled primarily by regulation of HisG enzymatic activity. This is ATP phosphoribosyltransferase from Maricaulis maris (strain MCS10) (Caulobacter maris).